A 129-amino-acid chain; its full sequence is Small ribosomal subunit protein uS12 (129 aa).

The disordered stretch occupies residues 1–25; the sequence is MPTYNQLVRFGRKSKTRKTKSPALE. Residues 10–20 show a composition bias toward basic residues; that stretch reads FGRKSKTRKTK. Asp89 bears the 3-methylthioaspartic acid mark. The tract at residues 109 to 129 is disordered; the sequence is GRKQGRSRYGTPRKQVAVTKK.

Belongs to the universal ribosomal protein uS12 family. In terms of assembly, part of the 30S ribosomal subunit. Contacts proteins S8 and S17. May interact with IF1 in the 30S initiation complex.

In terms of biological role, with S4 and S5 plays an important role in translational accuracy. Its function is as follows. Interacts with and stabilizes bases of the 16S rRNA that are involved in tRNA selection in the A site and with the mRNA backbone. Located at the interface of the 30S and 50S subunits, it traverses the body of the 30S subunit contacting proteins on the other side and probably holding the rRNA structure together. The combined cluster of proteins S8, S12 and S17 appears to hold together the shoulder and platform of the 30S subunit. This chain is Small ribosomal subunit protein uS12, found in Rickettsia peacockii (strain Rustic).